The sequence spans 322 residues: Protein-methionine-sulfoxide reductase catalytic subunit MsrP (322 aa).

Positions 1–59 (MSFRDALNLPSSEITDESVYRDRRRLLQLLALTPALGVAGCAEADPPPPPKTVVTPAQA) form a signal peptide, tat-type signal. Residues Asn79, 82–83 (YE), Cys137, Thr172, Asn220, Arg225, and 236–238 (SIK) contribute to the Mo-molybdopterin site.

This sequence belongs to the MsrP family. In terms of assembly, heterodimer of a catalytic subunit (MsrP) and a heme-binding subunit (MsrQ). It depends on Mo-molybdopterin as a cofactor. Post-translationally, predicted to be exported by the Tat system. The position of the signal peptide cleavage has not been experimentally proven.

The protein localises to the periplasm. The catalysed reaction is L-methionyl-[protein] + a quinone + H2O = L-methionyl-(S)-S-oxide-[protein] + a quinol. It catalyses the reaction L-methionyl-[protein] + a quinone + H2O = L-methionyl-(R)-S-oxide-[protein] + a quinol. Its function is as follows. Part of the MsrPQ system that repairs oxidized periplasmic proteins containing methionine sulfoxide residues (Met-O), using respiratory chain electrons. Thus protects these proteins from oxidative-stress damage caused by reactive species of oxygen and chlorine generated by the host defense mechanisms. MsrPQ is essential for the maintenance of envelope integrity under bleach stress, rescuing a wide series of structurally unrelated periplasmic proteins from methionine oxidation. The catalytic subunit MsrP is non-stereospecific, being able to reduce both (R-) and (S-) diastereoisomers of methionine sulfoxide. In Xanthomonas axonopodis pv. citri (strain 306), this protein is Protein-methionine-sulfoxide reductase catalytic subunit MsrP.